Consider the following 132-residue polypeptide: Ribonuclease P protein component (132 aa).

It belongs to the RnpA family. Consists of a catalytic RNA component (M1 or rnpB) and a protein subunit.

The catalysed reaction is Endonucleolytic cleavage of RNA, removing 5'-extranucleotides from tRNA precursor.. In terms of biological role, RNaseP catalyzes the removal of the 5'-leader sequence from pre-tRNA to produce the mature 5'-terminus. It can also cleave other RNA substrates such as 4.5S RNA. The protein component plays an auxiliary but essential role in vivo by binding to the 5'-leader sequence and broadening the substrate specificity of the ribozyme. The sequence is that of Ribonuclease P protein component from Marinobacter nauticus (strain ATCC 700491 / DSM 11845 / VT8) (Marinobacter aquaeolei).